The chain runs to 208 residues: Thymidylate kinase (208 aa).

10-17 provides a ligand contact to ATP; it reads GGEGAGKS.

Belongs to the thymidylate kinase family.

The catalysed reaction is dTMP + ATP = dTDP + ADP. Functionally, phosphorylation of dTMP to form dTDP in both de novo and salvage pathways of dTTP synthesis. This Alcanivorax borkumensis (strain ATCC 700651 / DSM 11573 / NCIMB 13689 / SK2) protein is Thymidylate kinase.